Reading from the N-terminus, the 253-residue chain is MKKKEEGFIIHPIPVLMDNIIWIWVKEKQAIVVDPAISEPVINLLKGNGLSLHSVLQTHHHEDHIGGTQELINVWPSASVIAAKSDLDRIQFQTKSVVDNEELDILGQKIKVIEVPGHTSNHICFFLQGSKESKIDPVLFCGDTLFGAGCGRLFEGTPEQMFNSLSRINNLPKNTKIYCAHEYTEANLRWAKSIFPEDIYIEERLKEVILRKSKGFLSIPSKLSEERKTNLFIRASNQREFAQLRLHKDNWKS.

Residues His-59, His-61, Asp-63, His-64, His-118, Asp-143, and His-181 each coordinate Zn(2+).

The protein belongs to the metallo-beta-lactamase superfamily. Glyoxalase II family. In terms of assembly, monomer. Zn(2+) serves as cofactor.

The enzyme catalyses an S-(2-hydroxyacyl)glutathione + H2O = a 2-hydroxy carboxylate + glutathione + H(+). It participates in secondary metabolite metabolism; methylglyoxal degradation; (R)-lactate from methylglyoxal: step 2/2. In terms of biological role, thiolesterase that catalyzes the hydrolysis of S-D-lactoyl-glutathione to form glutathione and D-lactic acid. The protein is Hydroxyacylglutathione hydrolase of Prochlorococcus marinus (strain SARG / CCMP1375 / SS120).